The chain runs to 110 residues: Secreted RxLR effector protein 89 (110 aa).

An N-terminal signal peptide occupies residues 1–22 (MTSVVIVVSVAVLLGVLVITDS). Residue Asn-29 is glycosylated (N-linked (GlcNAc...) asparagine). Positions 61–74 (RHLRTILQWWQERR) match the RxLR-dEER motif.

Belongs to the RxLR effector family.

The protein localises to the secreted. It is found in the host nucleus. The protein resides in the host cytoplasm. In terms of biological role, secreted effector that completely suppresses the host cell death induced by cell death-inducing proteins. This Plasmopara viticola (Downy mildew of grapevine) protein is Secreted RxLR effector protein 89.